A 329-amino-acid chain; its full sequence is Beta-ketoacyl-[acyl-carrier-protein] synthase III (329 aa).

Catalysis depends on residues Cys-123 and His-256. The segment at 257–261 (QANVR) is ACP-binding. Asn-286 is a catalytic residue.

The protein belongs to the thiolase-like superfamily. FabH family. As to quaternary structure, homodimer.

The protein resides in the cytoplasm. The enzyme catalyses malonyl-[ACP] + acetyl-CoA + H(+) = 3-oxobutanoyl-[ACP] + CO2 + CoA. It functions in the pathway lipid metabolism; fatty acid biosynthesis. Its function is as follows. Catalyzes the condensation reaction of fatty acid synthesis by the addition to an acyl acceptor of two carbons from malonyl-ACP. Catalyzes the first condensation reaction which initiates fatty acid synthesis and may therefore play a role in governing the total rate of fatty acid production. Possesses both acetoacetyl-ACP synthase and acetyl transacylase activities. Its substrate specificity determines the biosynthesis of branched-chain and/or straight-chain of fatty acids. The sequence is that of Beta-ketoacyl-[acyl-carrier-protein] synthase III from Bordetella parapertussis (strain 12822 / ATCC BAA-587 / NCTC 13253).